Consider the following 218-residue polypeptide: Ribose-5-phosphate isomerase A (218 aa).

Substrate-binding positions include 28–31 (TGST), 81–84 (DGAD), and 94–97 (KGGG). Residue Glu-103 is the Proton acceptor of the active site. Lys-121 serves as a coordination point for substrate.

It belongs to the ribose 5-phosphate isomerase family. Homodimer.

It carries out the reaction aldehydo-D-ribose 5-phosphate = D-ribulose 5-phosphate. The protein operates within carbohydrate degradation; pentose phosphate pathway; D-ribose 5-phosphate from D-ribulose 5-phosphate (non-oxidative stage): step 1/1. Functionally, catalyzes the reversible conversion of ribose-5-phosphate to ribulose 5-phosphate. The protein is Ribose-5-phosphate isomerase A of Methylococcus capsulatus (strain ATCC 33009 / NCIMB 11132 / Bath).